The sequence spans 230 residues: Ureidoacrylate amidohydrolase RutB (230 aa).

The active-site Proton acceptor is D23. K132 is a catalytic residue. C165 (nucleophile) is an active-site residue.

The protein belongs to the isochorismatase family. RutB subfamily.

The catalysed reaction is (Z)-3-ureidoacrylate + H2O + H(+) = (Z)-3-aminoacrylate + NH4(+) + CO2. It catalyses the reaction (Z)-3-ureidoacrylate + H2O = (Z)-3-aminoacrylate + carbamate + H(+). The enzyme catalyses (Z)-2-methylureidoacrylate + H2O + H(+) = (Z)-2-methylaminoacrylate + NH4(+) + CO2. Its function is as follows. Hydrolyzes ureidoacrylate to form aminoacrylate and carbamate. The carbamate hydrolyzes spontaneously, thereby releasing one of the nitrogen atoms of the pyrimidine ring as ammonia and one of its carbon atoms as CO2. This Yersinia enterocolitica serotype O:8 / biotype 1B (strain NCTC 13174 / 8081) protein is Ureidoacrylate amidohydrolase RutB.